Consider the following 379-residue polypeptide: Succinyl-diaminopimelate desuccinylase (379 aa).

H70 contacts Zn(2+). The active site involves D72. Residue D103 coordinates Zn(2+). Residue E137 is the Proton acceptor of the active site. Residues E138, E166, and H352 each coordinate Zn(2+).

Belongs to the peptidase M20A family. DapE subfamily. In terms of assembly, homodimer. The cofactor is Zn(2+). It depends on Co(2+) as a cofactor.

The enzyme catalyses N-succinyl-(2S,6S)-2,6-diaminopimelate + H2O = (2S,6S)-2,6-diaminopimelate + succinate. It participates in amino-acid biosynthesis; L-lysine biosynthesis via DAP pathway; LL-2,6-diaminopimelate from (S)-tetrahydrodipicolinate (succinylase route): step 3/3. Catalyzes the hydrolysis of N-succinyl-L,L-diaminopimelic acid (SDAP), forming succinate and LL-2,6-diaminopimelate (DAP), an intermediate involved in the bacterial biosynthesis of lysine and meso-diaminopimelic acid, an essential component of bacterial cell walls. The polypeptide is Succinyl-diaminopimelate desuccinylase (Shewanella baltica (strain OS223)).